A 699-amino-acid chain; its full sequence is TPR repeat-containing thioredoxin TTL1 (699 aa).

Residues methionine 1–alanine 211 are disordered. Basic and acidic residues predominate over residues serine 9–aspartate 20. Phosphoserine occurs at positions 39 and 42. Composition is skewed to low complexity over residues threonine 52 to serine 70 and arginine 83 to alanine 135. Positions serine 166–isoleucine 182 are enriched in gly residues. A compositionally biased stretch (low complexity) spans asparagine 195 to valine 210. TPR repeat units lie at residues serine 227–asparagine 260, alanine 262–tyrosine 294, arginine 296–methionine 328, alanine 419–cysteine 452, valine 465–asparagine 498, alanine 499–tyrosine 532, and lysine 534–aspartate 566. The Thioredoxin domain maps to glutamine 605–glutamate 691.

In terms of tissue distribution, expressed in the root elongation zone, stele, root cap, embryo vascular system, leaf axilar buds, silique abscission zone and guard cells.

In terms of biological role, involved in responses to osmotic stress and abscisic acid (ABA). May act as a positive regulator of ABA signaling during germination and seedling development under stress. In Arabidopsis thaliana (Mouse-ear cress), this protein is TPR repeat-containing thioredoxin TTL1 (TTL1).